The following is a 98-amino-acid chain: MMSINLNLIMAFSLALAGVLIYRSHLMSTLLCLEGMMLSLFILMALIISHFHMFSTSMAPLILLVFSACEAGVGLALLVKTSSNYGNDYVQNLNLLQC.

3 helical membrane-spanning segments follow: residues 1-21 (MMSI…GVLI), 28-48 (STLL…ALII), and 59-79 (APLI…ALLV).

It belongs to the complex I subunit 4L family. As to quaternary structure, core subunit of respiratory chain NADH dehydrogenase (Complex I) which is composed of 45 different subunits.

The protein resides in the mitochondrion inner membrane. The catalysed reaction is a ubiquinone + NADH + 5 H(+)(in) = a ubiquinol + NAD(+) + 4 H(+)(out). Its function is as follows. Core subunit of the mitochondrial membrane respiratory chain NADH dehydrogenase (Complex I) which catalyzes electron transfer from NADH through the respiratory chain, using ubiquinone as an electron acceptor. Part of the enzyme membrane arm which is embedded in the lipid bilayer and involved in proton translocation. The protein is NADH-ubiquinone oxidoreductase chain 4L (MT-ND4L) of Lagostrophus fasciatus (Banded hare-wallaby).